A 204-amino-acid chain; its full sequence is Holliday junction branch migration complex subunit RuvA (204 aa).

A domain I region spans residues 1–67 (MIAFLSGHLV…ETELVLYGFG (67 aa)). Residues 68–146 (SPAERDLFVE…HWRQGMGVAD (79 aa)) form a domain II region. Residues 147 to 157 (QPLAGGPPMPI) are flexible linker. A domain III region spans residues 157-204 (IREEVEMALLALGYSTQEIQAALQALPTHPRPTEDWLRDAITYLSQQP).

The protein belongs to the RuvA family. As to quaternary structure, homotetramer. Forms an RuvA(8)-RuvB(12)-Holliday junction (HJ) complex. HJ DNA is sandwiched between 2 RuvA tetramers; dsDNA enters through RuvA and exits via RuvB. An RuvB hexamer assembles on each DNA strand where it exits the tetramer. Each RuvB hexamer is contacted by two RuvA subunits (via domain III) on 2 adjacent RuvB subunits; this complex drives branch migration. In the full resolvosome a probable DNA-RuvA(4)-RuvB(12)-RuvC(2) complex forms which resolves the HJ.

It is found in the cytoplasm. Its function is as follows. The RuvA-RuvB-RuvC complex processes Holliday junction (HJ) DNA during genetic recombination and DNA repair, while the RuvA-RuvB complex plays an important role in the rescue of blocked DNA replication forks via replication fork reversal (RFR). RuvA specifically binds to HJ cruciform DNA, conferring on it an open structure. The RuvB hexamer acts as an ATP-dependent pump, pulling dsDNA into and through the RuvAB complex. HJ branch migration allows RuvC to scan DNA until it finds its consensus sequence, where it cleaves and resolves the cruciform DNA. This is Holliday junction branch migration complex subunit RuvA from Synechococcus sp. (strain JA-2-3B'a(2-13)) (Cyanobacteria bacterium Yellowstone B-Prime).